A 163-amino-acid polypeptide reads, in one-letter code: Lipoprotein signal peptidase (163 aa).

Transmembrane regions (helical) follow at residues 7-27, 64-84, and 99-119; these read LSFL…KYLV, WQKY…VYLL, and ALII…GFVV. Active-site residues include D120 and D138. A helical membrane pass occupies residues 133 to 153; sequence VFNVADIAICVGVGLLILDSF.

It belongs to the peptidase A8 family.

It is found in the cell inner membrane. It carries out the reaction Release of signal peptides from bacterial membrane prolipoproteins. Hydrolyzes -Xaa-Yaa-Zaa-|-(S,diacylglyceryl)Cys-, in which Xaa is hydrophobic (preferably Leu), and Yaa (Ala or Ser) and Zaa (Gly or Ala) have small, neutral side chains.. It functions in the pathway protein modification; lipoprotein biosynthesis (signal peptide cleavage). Functionally, this protein specifically catalyzes the removal of signal peptides from prolipoproteins. The polypeptide is Lipoprotein signal peptidase (Actinobacillus succinogenes (strain ATCC 55618 / DSM 22257 / CCUG 43843 / 130Z)).